Reading from the N-terminus, the 263-residue chain is Interleukin-15 receptor subunit alpha (263 aa).

A signal peptide spans 1–32 (MASPQLRGYGVQAIPVLLLLLLLLLLPLRVTP). Topologically, residues 33–205 (GTTCPPPVSI…ISPHSSKMTK (173 aa)) are extracellular. Residues 34 to 98 (TTCPPPVSIE…WTTPSLKCIR (65 aa)) enclose the Sushi domain. Disulfide bonds link Cys-36–Cys-78 and Cys-62–Cys-96. An N-linked (GlcNAc...) asparagine glycan is attached at Asn-51. Residues 113-135 (TPKVTSQPESPSPSAKEPEAFSP) show a composition bias toward low complexity. Residues 113-178 (TPKVTSQPES…HKSSRAPSLA (66 aa)) are disordered. A compositionally biased stretch (polar residues) spans 136-145 (KSDTAMTTET). The span at 154 to 169 (TPSQTTSAGTTGTGSH) shows a compositional bias: low complexity. Residues 206-226 (VAISTSVLLVGAGVVMAFLAW) form a helical membrane-spanning segment. Residues 227–263 (YIKSRQPSQPCRVEVETMETVPMTVRASSKEDEDTGA) lie on the Cytoplasmic side of the membrane.

As to quaternary structure, the interleukin-15 receptor IL15R is a heterotrimer of IL15RA, IL2RB and IL2RG. IL15RA also self-associates. Interacts with SYK. N-glycosylated and O-glycosylated. Post-translationally, a soluble form (sIL-15RA) arises from proteolytic shedding of the membrane-anchored receptor. It also binds IL15 and thus interferes with IL15 binding to the membrane receptor. Widely expressed.

The protein resides in the membrane. It localises to the nucleus membrane. The protein localises to the cell surface. It is found in the secreted. Its subcellular location is the extracellular space. High-affinity receptor for interleukin-15. Can signal both in cis and trans where IL15R from one subset of cells presents IL15 to neighboring IL2RG-expressing cells. In neutrophils, binds and activates kinase SYK in response to IL15 stimulation. In neutrophils, required for IL15-induced phagocytosis in a SYK-dependent manner. The polypeptide is Interleukin-15 receptor subunit alpha (Il15ra) (Mus musculus (Mouse)).